The primary structure comprises 201 residues: Holliday junction branch migration complex subunit RuvA (201 aa).

A domain I region spans residues 1 to 64 (MYEYIRGQFQ…EDFIGLYGFT (64 aa)). The tract at residues 65-143 (TREELEMFKL…PDELTSEEGQ (79 aa)) is domain II. Residues 144-152 (LIEGINDNS) are flexible linker. The segment at 153-201 (DYSFNINETLSALMALGYTEKEAQKALEKVDKTLSIENMIKESLKLLMR) is domain III.

It belongs to the RuvA family. Homotetramer. Forms an RuvA(8)-RuvB(12)-Holliday junction (HJ) complex. HJ DNA is sandwiched between 2 RuvA tetramers; dsDNA enters through RuvA and exits via RuvB. An RuvB hexamer assembles on each DNA strand where it exits the tetramer. Each RuvB hexamer is contacted by two RuvA subunits (via domain III) on 2 adjacent RuvB subunits; this complex drives branch migration. In the full resolvosome a probable DNA-RuvA(4)-RuvB(12)-RuvC(2) complex forms which resolves the HJ.

It is found in the cytoplasm. In terms of biological role, the RuvA-RuvB-RuvC complex processes Holliday junction (HJ) DNA during genetic recombination and DNA repair, while the RuvA-RuvB complex plays an important role in the rescue of blocked DNA replication forks via replication fork reversal (RFR). RuvA specifically binds to HJ cruciform DNA, conferring on it an open structure. The RuvB hexamer acts as an ATP-dependent pump, pulling dsDNA into and through the RuvAB complex. HJ branch migration allows RuvC to scan DNA until it finds its consensus sequence, where it cleaves and resolves the cruciform DNA. The chain is Holliday junction branch migration complex subunit RuvA from Clostridium perfringens (strain 13 / Type A).